Consider the following 304-residue polypeptide: Cell surface-binding protein OPG105 (304 aa).

Belongs to the alpha-carbonic anhydrase family. As to quaternary structure, homodimer; disulfide-linked. In terms of processing, apparently non-glycosylated.

The protein localises to the virion membrane. Functionally, binds to chondroitin sulfate on the cell surface to provide virion attachment to target cell. This Monkeypox virus protein is Cell surface-binding protein OPG105 (OPG105).